We begin with the raw amino-acid sequence, 138 residues long: Basic phospholipase A2 PL-X' (138 aa).

A signal peptide spans 1–16 (MRTLWIMAVLLVGVEG). Intrachain disulfides connect C42/C131, C44/C60, C59/C111, C65/C138, C66/C104, C73/C97, and C91/C102. Ca(2+)-binding residues include Y43, G45, and G47. Residue H63 is part of the active site. D64 is a binding site for Ca(2+). Residue D105 is part of the active site.

The protein belongs to the phospholipase A2 family. Group II subfamily. D49 sub-subfamily. The cofactor is Ca(2+). Expressed by the venom gland.

It is found in the secreted. The catalysed reaction is a 1,2-diacyl-sn-glycero-3-phosphocholine + H2O = a 1-acyl-sn-glycero-3-phosphocholine + a fatty acid + H(+). Its function is as follows. PLA2 catalyzes the calcium-dependent hydrolysis of the 2-acyl groups in 3-sn-phosphoglycerides. The protein is Basic phospholipase A2 PL-X' of Protobothrops flavoviridis (Habu).